A 209-amino-acid polypeptide reads, in one-letter code: Glutathione S-transferase 2 (209 aa).

The 81-residue stretch at 1-81 folds into the GST N-terminal domain; it reads MLDFYYLPGS…YLCDQYGDED (81 aa). Residues serine 10, 51–53, and 65–67 contribute to the glutathione site; these read RTI and ESR. The region spanning 88 to 209 is the GST C-terminal domain; that stretch reads DTIQRAIVNQ…SGAKEFLTYK (122 aa).

The protein belongs to the GST superfamily. Theta family. As to quaternary structure, homodimer.

It catalyses the reaction RX + glutathione = an S-substituted glutathione + a halide anion + H(+). Functionally, conjugation of reduced glutathione to a wide number of exogenous and endogenous hydrophobic electrophiles. This is Glutathione S-transferase 2 (GstD2) from Anopheles gambiae (African malaria mosquito).